The primary structure comprises 215 residues: Phosphoenolpyruvate guanylyltransferase (215 aa).

Residues Thr-144, Gly-159, and Ser-162 each contribute to the phosphoenolpyruvate site.

The protein belongs to the CofC family.

The catalysed reaction is phosphoenolpyruvate + GTP + H(+) = enolpyruvoyl-2-diphospho-5'-guanosine + diphosphate. It functions in the pathway cofactor biosynthesis; coenzyme F420 biosynthesis. Guanylyltransferase that catalyzes the activation of phosphoenolpyruvate (PEP) as enolpyruvoyl-2-diphospho-5'-guanosine, via the condensation of PEP with GTP. It is involved in the biosynthesis of coenzyme F420, a hydride carrier cofactor. The polypeptide is Phosphoenolpyruvate guanylyltransferase (Geodermatophilus obscurus (strain ATCC 25078 / DSM 43160 / JCM 3152 / CCUG 61914 / KCC A-0152 / KCTC 9177 / NBRC 13315 / NRRL B-3577 / G-20)).